Consider the following 459-residue polypeptide: Exodeoxyribonuclease 7 large subunit (459 aa).

It belongs to the XseA family. In terms of assembly, heterooligomer composed of large and small subunits.

It localises to the cytoplasm. It catalyses the reaction Exonucleolytic cleavage in either 5'- to 3'- or 3'- to 5'-direction to yield nucleoside 5'-phosphates.. Functionally, bidirectionally degrades single-stranded DNA into large acid-insoluble oligonucleotides, which are then degraded further into small acid-soluble oligonucleotides. This Yersinia pseudotuberculosis serotype IB (strain PB1/+) protein is Exodeoxyribonuclease 7 large subunit.